Reading from the N-terminus, the 253-residue chain is Phosphoadenosine 5'-phosphosulfate reductase (253 aa).

The active-site Nucleophile; cysteine thiosulfonate intermediate is the C239.

Belongs to the PAPS reductase family. CysH subfamily.

The protein localises to the cytoplasm. The catalysed reaction is [thioredoxin]-disulfide + sulfite + adenosine 3',5'-bisphosphate + 2 H(+) = [thioredoxin]-dithiol + 3'-phosphoadenylyl sulfate. The protein operates within sulfur metabolism; hydrogen sulfide biosynthesis; sulfite from sulfate: step 3/3. Functionally, catalyzes the formation of sulfite from phosphoadenosine 5'-phosphosulfate (PAPS) using thioredoxin as an electron donor. The chain is Phosphoadenosine 5'-phosphosulfate reductase from Aliivibrio fischeri (strain MJ11) (Vibrio fischeri).